The primary structure comprises 118 residues: Large ribosomal subunit protein bL20 (118 aa).

It belongs to the bacterial ribosomal protein bL20 family.

In terms of biological role, binds directly to 23S ribosomal RNA and is necessary for the in vitro assembly process of the 50S ribosomal subunit. It is not involved in the protein synthesizing functions of that subunit. The chain is Large ribosomal subunit protein bL20 from Caldicellulosiruptor saccharolyticus (strain ATCC 43494 / DSM 8903 / Tp8T 6331).